Consider the following 573-residue polypeptide: Sulfite oxidase, mitochondrial (573 aa).

A mitochondrion-targeting transit peptide spans 1–34 (MRLLRPSWAGLLRGRHHQHQRHHRRLLLTTSRGS). Residues 14–26 (GRHHQHQRHHRRL) show a composition bias toward basic residues. The segment at 14–50 (GRHHQHQRHHRRLLLTTSRGSNGEREEQQHSQWSSPG) is disordered. Residues 108-186 (LPTYRAEEVE…LEGFRIGNLE (79 aa)) enclose the Cytochrome b5 heme-binding domain. The heme b site is built by histidine 144 and histidine 168. The segment at 190–199 (VTNVDDELGS) is hinge. The moco domain stretch occupies residues 200-423 (PWSQEPQRHA…DSHWQQNDYK (224 aa)). Mo-molybdopterin contacts are provided by residues 240 to 244 (YVRNH), cysteine 287, aspartate 344, histidine 383, arginine 388, and 399 to 401 (NVK). The tract at residues 424–567 (GFSPSTDWDT…RGVLANAYHK (144 aa)) is homodimerization.

Heme b is required as a cofactor. Mo-molybdopterin serves as cofactor. As to expression, expressed in the ensheathing glia with relatively weak expression in the CNS cortex (at protein level).

It localises to the mitochondrion intermembrane space. The enzyme catalyses sulfite + O2 + H2O = sulfate + H2O2. It participates in energy metabolism; sulfur metabolism. Functionally, required in ensheathing glial cells for normal larval locomotion. Oxidizes sulfite which is required to maintain glutamate homeostasis and as a consequence, neuronal network function. In Drosophila melanogaster (Fruit fly), this protein is Sulfite oxidase, mitochondrial.